Reading from the N-terminus, the 1520-residue chain is DNA topoisomerase 2 top-2 (1520 aa).

The span at 1–10 (MSDSDSEFSI) shows a compositional bias: acidic residues. Residues 1–40 (MSDSDSEFSIEDSPKKKTAPKKEKASPKKKKDDANESMVM) form a disordered region. A compositionally biased stretch (basic and acidic residues) spans 12–34 (DSPKKKTAPKKEKASPKKKKDDA). ATP contacts are provided by residues N126, N155, 183–185 (SSN), 196–203 (GRNGYGAK), and 411–413 (QTK). The region spanning 490–607 (CTLILTEGDS…SLIQRNFVEE (118 aa)) is the Toprim domain. E496, D576, and D578 together coordinate Mg(2+). Positions 750 to 1219 (IPCLVDGFKP…TWQDLWHEDL (470 aa)) constitute a Topo IIA-type catalytic domain. Y840 (O-(5'-phospho-DNA)-tyrosine intermediate) is an active-site residue. The segment at 1249–1520 (AADAKTGRGP…RGRVVDSDSD (272 aa)) is disordered. Residues 1283-1320 (TKAKYEKMSQPKKERVKKEPKEPKEPKKVKKEGQDIKK) are compositionally biased toward basic and acidic residues. Positions 1342–1364 (MSEESDVEFDEGIDFDSDDDGVE) are enriched in acidic residues.

The protein belongs to the type II topoisomerase family. In terms of assembly, homodimer. Interacts with nmad-1; the interaction is required for localization of top-2 to DNA. Interacts with gcna-1; this interaction allows the resolution of topoisomerase 2 DNA-protein cross-links. It depends on Mg(2+) as a cofactor. Mn(2+) serves as cofactor. Requires Ca(2+) as cofactor. As to expression, expressed in the hermaphrodite and male germline.

The protein localises to the nucleus. It is found in the nucleoplasm. It localises to the chromosome. Its subcellular location is the cytoplasm. The protein resides in the cytoskeleton. The protein localises to the spindle. It carries out the reaction ATP-dependent breakage, passage and rejoining of double-stranded DNA.. Its function is as follows. Control of topological states of DNA by transient breakage and subsequent rejoining of DNA strands. Topoisomerase II makes double-strand breaks. Essential during mitosis in the adult germline and during embryogenesis for proper segregation of daughter chromosomes. Required for centromere resolution during mitosis. Required for chromosome segregation in anaphase of meiosis I during spermatogenesis. Promotes cleavage furrow stability during cytokinesis upon the presence of chromatin obstructions. Promotes DNA break formation upon zygotic genome activation in the Z2 and Z3 primordial germ cells in L1 larvae, thereby activating a checkpoint response. Essential for embryogenesis. The protein is DNA topoisomerase 2 top-2 of Caenorhabditis elegans.